The primary structure comprises 303 residues: Signal recognition particle receptor FtsY (303 aa).

Residues 108 to 115 (GVNGVGKT), 190 to 194 (DTAGR), and 254 to 257 (TKLD) each bind GTP.

This sequence belongs to the GTP-binding SRP family. FtsY subfamily. As to quaternary structure, part of the signal recognition particle protein translocation system, which is composed of SRP and FtsY. SRP is a ribonucleoprotein composed of Ffh and a 4.5S RNA molecule.

It localises to the cell inner membrane. Its subcellular location is the cytoplasm. It catalyses the reaction GTP + H2O = GDP + phosphate + H(+). Its function is as follows. Involved in targeting and insertion of nascent membrane proteins into the cytoplasmic membrane. Acts as a receptor for the complex formed by the signal recognition particle (SRP) and the ribosome-nascent chain (RNC). Interaction with SRP-RNC leads to the transfer of the RNC complex to the Sec translocase for insertion into the membrane, the hydrolysis of GTP by both Ffh and FtsY, and the dissociation of the SRP-FtsY complex into the individual components. The chain is Signal recognition particle receptor FtsY from Rickettsia typhi (strain ATCC VR-144 / Wilmington).